The primary structure comprises 130 residues: Small ribosomal subunit protein uS8 (130 aa).

It belongs to the universal ribosomal protein uS8 family. As to quaternary structure, part of the 30S ribosomal subunit.

Its function is as follows. One of the primary rRNA binding proteins, it binds directly to 16S rRNA central domain where it helps coordinate assembly of the platform of the 30S subunit. The sequence is that of Small ribosomal subunit protein uS8 from Methanococcus aeolicus (strain ATCC BAA-1280 / DSM 17508 / OCM 812 / Nankai-3).